Consider the following 213-residue polypeptide: ATP-dependent Clp protease proteolytic subunit (213 aa).

The active-site Nucleophile is the S114. Residue H139 is part of the active site.

This sequence belongs to the peptidase S14 family. As to quaternary structure, fourteen ClpP subunits assemble into 2 heptameric rings which stack back to back to give a disk-like structure with a central cavity, resembling the structure of eukaryotic proteasomes.

Its subcellular location is the cytoplasm. The enzyme catalyses Hydrolysis of proteins to small peptides in the presence of ATP and magnesium. alpha-casein is the usual test substrate. In the absence of ATP, only oligopeptides shorter than five residues are hydrolyzed (such as succinyl-Leu-Tyr-|-NHMec, and Leu-Tyr-Leu-|-Tyr-Trp, in which cleavage of the -Tyr-|-Leu- and -Tyr-|-Trp bonds also occurs).. Functionally, cleaves peptides in various proteins in a process that requires ATP hydrolysis. Has a chymotrypsin-like activity. Plays a major role in the degradation of misfolded proteins. This is ATP-dependent Clp protease proteolytic subunit from Methylobacillus flagellatus (strain ATCC 51484 / DSM 6875 / VKM B-1610 / KT).